The chain runs to 296 residues: Peptide transport system permease protein SapC (296 aa).

At 1-28 (MPYDSVYSEKRPPGTLRTAWRKFYSDAS) the chain is on the cytoplasmic side. A helical transmembrane segment spans residues 29–49 (AMVGLYGCAGLAVLCIFGGWF). At 50-98 (APYGIDQQFLGYQLLPPSWSRYGEVSFFLGTDDLGRDVLSRLLSGAAPT) the chain is on the periplasmic side. A helical membrane pass occupies residues 99 to 119 (VGGAFVVTLAATICGLVLGTF). Positions 99–284 (VGGAFVVTLA…ISVLLVNLLG (186 aa)) constitute an ABC transmembrane type-1 domain. The Cytoplasmic segment spans residues 120 to 133 (AGATHGLRSAVLNH). A helical transmembrane segment spans residues 134 to 154 (ILDTLLAIPSLLLAIIVVAFA). The Periplasmic segment spans residues 155 to 196 (GPSLSHAMFAVWLALLPRMVRSIYSMVHDELEKEYVIAARLD). The helical transmembrane segment at 197–217 (GASTLNILWFAVMPNITAGLV) threads the bilayer. Residues 218–222 (TEITR) lie on the Cytoplasmic side of the membrane. Residues 223–243 (ALSMAILDIAALGFLDLGAQL) form a helical membrane-spanning segment. Over 244-257 (PSPEWGAMLGDALE) the chain is Periplasmic. The helical transmembrane segment at 258 to 278 (LIYVAPWTVMLPGAAIMISVL) threads the bilayer. Residues 279-296 (LVNLLGDGVRRAIIAGVE) lie on the Cytoplasmic side of the membrane.

It belongs to the binding-protein-dependent transport system permease family. OppBC subfamily.

The protein localises to the cell inner membrane. Involved in a peptide intake transport system that plays a role in the resistance to antimicrobial peptides. In Escherichia coli O6:H1 (strain CFT073 / ATCC 700928 / UPEC), this protein is Peptide transport system permease protein SapC (sapC).